A 340-amino-acid chain; its full sequence is tRNA N6-adenosine threonylcarbamoyltransferase (340 aa).

H111 and H115 together coordinate Fe cation. Substrate-binding positions include 133-137 (VVSGG), D166, G179, D183, and N274. D299 is a Fe cation binding site.

Belongs to the KAE1 / TsaD family. Fe(2+) serves as cofactor.

The protein resides in the cytoplasm. The enzyme catalyses L-threonylcarbamoyladenylate + adenosine(37) in tRNA = N(6)-L-threonylcarbamoyladenosine(37) in tRNA + AMP + H(+). Functionally, required for the formation of a threonylcarbamoyl group on adenosine at position 37 (t(6)A37) in tRNAs that read codons beginning with adenine. Is involved in the transfer of the threonylcarbamoyl moiety of threonylcarbamoyl-AMP (TC-AMP) to the N6 group of A37, together with TsaE and TsaB. TsaD likely plays a direct catalytic role in this reaction. This is tRNA N6-adenosine threonylcarbamoyltransferase from Brachyspira hyodysenteriae (strain ATCC 49526 / WA1).